Consider the following 541-residue polypeptide: Peptidyl-prolyl isomerase cwc-27 (541 aa).

The 183-residue stretch at 11–193 (PTASAIIHTT…YPIKITRIEI (183 aa)) folds into the PPIase cyclophilin-type domain. 2 disordered regions span residues 199–443 (DDMQ…GQAD) and 513–541 (TLKE…RDRH). 3 stretches are compositionally biased toward basic and acidic residues: residues 279–307 (AKRD…ESRR), 316–348 (QKKE…KTNE), and 361–374 (IHSE…KKSA). The span at 432 to 442 (DVEDGEQDGQA) shows a compositional bias: acidic residues. 2 stretches are compositionally biased toward basic and acidic residues: residues 513 to 525 (TLKE…RDAK) and 532 to 541 (AWDRGRRDRH).

This sequence belongs to the cyclophilin-type PPIase family. CWC27 subfamily. In terms of assembly, associated with the spliceosome.

The protein resides in the cytoplasm. The protein localises to the nucleus. It catalyses the reaction [protein]-peptidylproline (omega=180) = [protein]-peptidylproline (omega=0). In terms of biological role, PPIases accelerate the folding of proteins. It catalyzes the cis-trans isomerization of proline imidic peptide bonds in oligopeptides. Involved in pre-mRNA splicing. The protein is Peptidyl-prolyl isomerase cwc-27 (cwc-27) of Neurospora crassa (strain ATCC 24698 / 74-OR23-1A / CBS 708.71 / DSM 1257 / FGSC 987).